The following is a 215-amino-acid chain: Octanoyltransferase (215 aa).

Residues 33–209 (PDTPDQLWLV…QFARKLGYET (177 aa)) form the BPL/LPL catalytic domain. Residues 72 to 79 (RGGQVTYH), 139 to 141 (SLG), and 152 to 154 (GLA) contribute to the substrate site. Catalysis depends on cysteine 170, which acts as the Acyl-thioester intermediate.

It belongs to the LipB family.

It localises to the cytoplasm. The enzyme catalyses octanoyl-[ACP] + L-lysyl-[protein] = N(6)-octanoyl-L-lysyl-[protein] + holo-[ACP] + H(+). It functions in the pathway protein modification; protein lipoylation via endogenous pathway; protein N(6)-(lipoyl)lysine from octanoyl-[acyl-carrier-protein]: step 1/2. Its function is as follows. Catalyzes the transfer of endogenously produced octanoic acid from octanoyl-acyl-carrier-protein onto the lipoyl domains of lipoate-dependent enzymes. Lipoyl-ACP can also act as a substrate although octanoyl-ACP is likely to be the physiological substrate. In Cellvibrio japonicus (strain Ueda107) (Pseudomonas fluorescens subsp. cellulosa), this protein is Octanoyltransferase.